Consider the following 417-residue polypeptide: Serine/threonine-protein kinase PkaB (417 aa).

Residues 9-270 enclose the Protein kinase domain; the sequence is YTAHQILGRG…ELSARLRELL (262 aa). Residues 15–23 and Lys36 each bind ATP; that span reads LGRGSAGTV. Asp130 serves as the catalytic Proton acceptor. Disordered regions lie at residues 279-371 and 395-417; these read LDVD…RAAT and LATG…PAAP. Residues 280-293 show a composition bias toward acidic residues; it reads DVDEPDAEQPEDAP. Low complexity-rich tracts occupy residues 294 to 308 and 349 to 368; these read DASA…STAE and GTAR…ARNR. A compositionally biased stretch (polar residues) spans 408-417; that stretch reads DTRNSAPAAP.

This sequence belongs to the protein kinase superfamily. Ser/Thr protein kinase family. Post-translationally, autophosphorylated mainly at Thr.

It catalyses the reaction L-seryl-[protein] + ATP = O-phospho-L-seryl-[protein] + ADP + H(+). The enzyme catalyses L-threonyl-[protein] + ATP = O-phospho-L-threonyl-[protein] + ADP + H(+). The polypeptide is Serine/threonine-protein kinase PkaB (pkaB) (Streptomyces coelicolor (strain ATCC BAA-471 / A3(2) / M145)).